We begin with the raw amino-acid sequence, 349 residues long: Outer membrane protein assembly factor BamC (349 aa).

Positions 1-24 (MAILLQKSKVMKIAGMSLAMLLAA) are cleaved as a signal peptide. Cys25 carries the N-palmitoyl cysteine lipid modification. Cys25 carries S-diacylglycerol cysteine lipidation.

This sequence belongs to the BamC family. In terms of assembly, part of the Bam complex, which is composed of the outer membrane protein BamA, and four lipoproteins BamB, BamC, BamD and BamE.

Its subcellular location is the cell outer membrane. Its function is as follows. Part of the outer membrane protein assembly complex, which is involved in assembly and insertion of beta-barrel proteins into the outer membrane. In Photorhabdus asymbiotica subsp. asymbiotica (strain ATCC 43949 / 3105-77) (Xenorhabdus luminescens (strain 2)), this protein is Outer membrane protein assembly factor BamC.